We begin with the raw amino-acid sequence, 713 residues long: Polyribonucleotide nucleotidyltransferase (713 aa).

Asp-488 and Asp-494 together coordinate Mg(2+). The 60-residue stretch at 555-614 (PRIEVMNIPTDKIRDVIGSGGKVIREIVEKTGAKINIEDDGTVKIASSNGKEIEAAKKWI) folds into the KH domain. The S1 motif domain occupies 624–692 (GEIYEGTVVK…ERGKVRLSMK (69 aa)).

It belongs to the polyribonucleotide nucleotidyltransferase family. Requires Mg(2+) as cofactor.

It localises to the cytoplasm. The catalysed reaction is RNA(n+1) + phosphate = RNA(n) + a ribonucleoside 5'-diphosphate. Functionally, involved in mRNA degradation. Catalyzes the phosphorolysis of single-stranded polyribonucleotides processively in the 3'- to 5'-direction. This Brucella anthropi (strain ATCC 49188 / DSM 6882 / CCUG 24695 / JCM 21032 / LMG 3331 / NBRC 15819 / NCTC 12168 / Alc 37) (Ochrobactrum anthropi) protein is Polyribonucleotide nucleotidyltransferase.